The primary structure comprises 165 residues: ATP synthase subunit b (165 aa).

The helical transmembrane segment at 11-31 (LIFWTIVNFLLLVFLLGKFAW) threads the bilayer.

The protein belongs to the ATPase B chain family. As to quaternary structure, F-type ATPases have 2 components, F(1) - the catalytic core - and F(0) - the membrane proton channel. F(1) has five subunits: alpha(3), beta(3), gamma(1), delta(1), epsilon(1). F(0) has three main subunits: a(1), b(2) and c(10-14). The alpha and beta chains form an alternating ring which encloses part of the gamma chain. F(1) is attached to F(0) by a central stalk formed by the gamma and epsilon chains, while a peripheral stalk is formed by the delta and b chains.

Its subcellular location is the cell membrane. In terms of biological role, f(1)F(0) ATP synthase produces ATP from ADP in the presence of a proton or sodium gradient. F-type ATPases consist of two structural domains, F(1) containing the extramembraneous catalytic core and F(0) containing the membrane proton channel, linked together by a central stalk and a peripheral stalk. During catalysis, ATP synthesis in the catalytic domain of F(1) is coupled via a rotary mechanism of the central stalk subunits to proton translocation. Functionally, component of the F(0) channel, it forms part of the peripheral stalk, linking F(1) to F(0). The protein is ATP synthase subunit b of Elusimicrobium minutum (strain Pei191).